A 275-amino-acid chain; its full sequence is Envelope glycoprotein (275 aa).

3 disulfides stabilise this stretch: C1–C10, C18–C27, and C58–C62. An N-linked (GlcNAc...) asparagine; by host glycan is attached at N122. Disulfide bonds link C164-C194, C187-C239, C204-C209, and C240-C245.

It belongs to the hantavirus envelope glycoprotein family. Homodimer. Homotetramer; forms heterotetrameric Gn-Gc spikes in the pre-fusion conformation. Homotrimer; forms homotrimer in the post-fusion conformation at acidic pH. Interacts (via C-terminus) with the nucleoprotein. Post-translationally, envelope polyprotein precursor is quickly cleaved in vivo just after synthesis, presumably by host signal peptidase.

It is found in the virion membrane. Its subcellular location is the host cell surface. The protein localises to the host Golgi apparatus membrane. The protein resides in the host endoplasmic reticulum membrane. Functionally, forms homotetramers with glycoprotein N at the surface of the virion. Attaches the virion to host cell receptors including integrin ITGAV/ITGB3. This attachment induces virion internalization predominantly through clathrin-dependent endocytosis. Class II fusion protein that promotes fusion of viral membrane with host endosomal membrane after endocytosis of the virion. This chain is Envelope glycoprotein (GP), found in Homo sapiens (Human).